We begin with the raw amino-acid sequence, 1293 residues long: Putative DNA-directed RNA polymerase 008R (1293 aa).

Residues C61, C64, C71, H74, C99, C102, and C123 each contribute to the Zn(2+) site. The DNA-binding element occupies 270–339; it reads TNRKPMAGIK…PVMVTPFNVS (70 aa). Over residues 354-376 the composition is skewed to basic and acidic residues; sequence EMRDGTVHRPSEWRPSHGDHMET. Positions 354–390 are disordered; the sequence is EMRDGTVHRPSEWRPSHGDHMETADGSPLGRVTRPSY. D474, D476, and D478 together coordinate Mg(2+). The tract at residues 724 to 734 is alpha-amanitin binding; the sequence is GQQYVGGSRPG. The bridging helix stretch occupies residues 776–788; that stretch reads PREVFFHAKSGRE.

This sequence belongs to the RNA polymerase beta' chain family.

It carries out the reaction RNA(n) + a ribonucleoside 5'-triphosphate = RNA(n+1) + diphosphate. In terms of biological role, component of the DNA-dependent RNA polymerase that catalyzes the transcription of DNA into RNA using the four ribonucleoside triphosphates as substrates. Largest and catalytic component of RNA polymerase II which synthesizes mRNA precursors and many functional non-coding RNAs. Forms the polymerase active center together with the second largest subunit. This is Putative DNA-directed RNA polymerase 008R from Frog virus 3 (isolate Goorha) (FV-3).